A 204-amino-acid polypeptide reads, in one-letter code: MRRSWALSRQVSEARFPGKRWLVAGLGNHGMPGTRHSVGMAVLGQIARRLGVAENWTRDSRCAADLALAPLGDAQLVLLRPRRLMNVNGRSVARAAELFGLTAEEIYLVHDELDKPLGKLALKLGGSARGHNGVRSCISCLNSNAMPRLLVGIGRPTHPNMVENHVLGCFSPEEQELLSPLMDQATDLLLDHIRARSQGPLSGL.

The active-site Proton acceptor is the His36. The tRNA site is built by Asn86 and Asn132.

Belongs to the PTH family.

It carries out the reaction an N-acyl-L-alpha-aminoacyl-tRNA + H2O = an N-acyl-L-amino acid + a tRNA + H(+). Its function is as follows. Peptidyl-tRNA hydrolase that cleaves nascent chains-tRNAs that are not stably fixed in the P-site of 60S ribosome-nascent chain complexes. Acts downstream of the ribosome-associated quality control (RQC) pathway to release non-ubiquitinated nascent chains from 60S and 80S ribosome-nascent chain complexes. Does not act on ubiquitinated nascent chains, which are cleaved by ANKZF1 for degradation. This Mus musculus (Mouse) protein is Probable peptidyl-tRNA hydrolase.